The sequence spans 589 residues: Early growth response protein 4 (589 aa).

Disordered stretches follow at residues 29–101, 383–411, and 436–466; these read GSAL…HSRR, AEGLPGLLTPPSGEGGSSGDGGEFLASTQ, and PGSSGVAAPPVPPPPPTPFPQAKARRKGRRG. Residues 76 to 86 are compositionally biased toward pro residues; sequence PLPPASPPPAR. A compositionally biased stretch (basic residues) spans 92 to 101; it reads ARPRAPHSRR. A compositionally biased stretch (gly residues) spans 395 to 404; sequence GEGGSSGDGG. Over residues 444 to 454 the composition is skewed to pro residues; it reads PPVPPPPPTPF. C2H2-type zinc fingers lie at residues 483–507, 513–535, and 541–563; these read FACPVESCVRSFARSDELNRHLRIH, FQCRICLRNFSRSDHLTTHVRTH, and FACDVCGRRFARSDEKKRHSKVH.

It belongs to the EGR C2H2-type zinc-finger protein family.

The protein resides in the nucleus. In terms of biological role, transcriptional regulator. Recognizes and binds to the DNA sequence 5'-GCGGGGGCG-3' (GSG). Activates the transcription of target genes whose products are required for mitogenesis and differentiation. The protein is Early growth response protein 4 (EGR4) of Homo sapiens (Human).